The sequence spans 199 residues: Octanoyltransferase (199 aa).

The 173-residue stretch at 27–199 folds into the BPL/LPL catalytic domain; it reads SNSCDELWLL…FVQYFLTQFK (173 aa). Substrate contacts are provided by residues 66 to 73, 133 to 135, and 146 to 148; these read RGGQVTYH, SIG, and GIA. The active-site Acyl-thioester intermediate is Cys-164.

This sequence belongs to the LipB family.

Its subcellular location is the cytoplasm. The catalysed reaction is octanoyl-[ACP] + L-lysyl-[protein] = N(6)-octanoyl-L-lysyl-[protein] + holo-[ACP] + H(+). It participates in protein modification; protein lipoylation via endogenous pathway; protein N(6)-(lipoyl)lysine from octanoyl-[acyl-carrier-protein]: step 1/2. Its function is as follows. Catalyzes the transfer of endogenously produced octanoic acid from octanoyl-acyl-carrier-protein onto the lipoyl domains of lipoate-dependent enzymes. Lipoyl-ACP can also act as a substrate although octanoyl-ACP is likely to be the physiological substrate. In Legionella pneumophila (strain Paris), this protein is Octanoyltransferase.